A 165-amino-acid polypeptide reads, in one-letter code: Lipoprotein signal peptidase (165 aa).

2 consecutive transmembrane segments (helical) span residues Trp-66–Thr-86 and Asn-91–Val-111. Catalysis depends on residues Asp-121 and Asp-139. Residues Trp-132–Ala-152 traverse the membrane as a helical segment.

This sequence belongs to the peptidase A8 family.

The protein localises to the cell inner membrane. The catalysed reaction is Release of signal peptides from bacterial membrane prolipoproteins. Hydrolyzes -Xaa-Yaa-Zaa-|-(S,diacylglyceryl)Cys-, in which Xaa is hydrophobic (preferably Leu), and Yaa (Ala or Ser) and Zaa (Gly or Ala) have small, neutral side chains.. It functions in the pathway protein modification; lipoprotein biosynthesis (signal peptide cleavage). This protein specifically catalyzes the removal of signal peptides from prolipoproteins. The protein is Lipoprotein signal peptidase of Nitratidesulfovibrio vulgaris (strain DP4) (Desulfovibrio vulgaris).